The following is a 123-amino-acid chain: NADH-quinone oxidoreductase subunit A (123 aa).

Transmembrane regions (helical) follow at residues 6 to 26, 66 to 86, and 93 to 113; these read LTPYLPLAVVLLLAGGMAMLI, VVALLFIVFDVEAVFLYPWAV, and WFGYVEMLVFAVTLVVGLIYI.

It belongs to the complex I subunit 3 family. In terms of assembly, NDH-1 is composed of 14 different subunits. Subunits NuoA, H, J, K, L, M, N constitute the membrane sector of the complex.

The protein resides in the cell inner membrane. The enzyme catalyses a quinone + NADH + 5 H(+)(in) = a quinol + NAD(+) + 4 H(+)(out). NDH-1 shuttles electrons from NADH, via FMN and iron-sulfur (Fe-S) centers, to quinones in the respiratory chain. The immediate electron acceptor for the enzyme in this species is believed to be ubiquinone. Couples the redox reaction to proton translocation (for every two electrons transferred, four hydrogen ions are translocated across the cytoplasmic membrane), and thus conserves the redox energy in a proton gradient. In Myxococcus xanthus (strain DK1622), this protein is NADH-quinone oxidoreductase subunit A.